We begin with the raw amino-acid sequence, 486 residues long: Glutamyl-tRNA(Gln) amidotransferase subunit A (486 aa).

Residues Lys74 and Ser149 each act as charge relay system in the active site. The active-site Acyl-ester intermediate is the Ser173.

The protein belongs to the amidase family. GatA subfamily. Heterotrimer of A, B and C subunits.

It carries out the reaction L-glutamyl-tRNA(Gln) + L-glutamine + ATP + H2O = L-glutaminyl-tRNA(Gln) + L-glutamate + ADP + phosphate + H(+). Allows the formation of correctly charged Gln-tRNA(Gln) through the transamidation of misacylated Glu-tRNA(Gln) in organisms which lack glutaminyl-tRNA synthetase. The reaction takes place in the presence of glutamine and ATP through an activated gamma-phospho-Glu-tRNA(Gln). The sequence is that of Glutamyl-tRNA(Gln) amidotransferase subunit A from Prochlorococcus marinus (strain MIT 9303).